The following is a 246-amino-acid chain: Cell division protein ZapD (246 aa).

This sequence belongs to the ZapD family. Interacts with FtsZ.

The protein resides in the cytoplasm. Functionally, cell division factor that enhances FtsZ-ring assembly. Directly interacts with FtsZ and promotes bundling of FtsZ protofilaments, with a reduction in FtsZ GTPase activity. The protein is Cell division protein ZapD of Vibrio vulnificus (strain CMCP6).